The primary structure comprises 109 residues: MEVKAIVKDTGYSALKVRLCVDMVRGKKVSEAITMLRFMTSPTAKVVSKVIKSAAANAENNFQMNPADLKISQIYADEARMLKRMRPQARGRVSPILKRSSHITVVVAD.

The protein belongs to the universal ribosomal protein uL22 family. As to quaternary structure, part of the 50S ribosomal subunit.

In terms of biological role, this protein binds specifically to 23S rRNA; its binding is stimulated by other ribosomal proteins, e.g. L4, L17, and L20. It is important during the early stages of 50S assembly. It makes multiple contacts with different domains of the 23S rRNA in the assembled 50S subunit and ribosome. Its function is as follows. The globular domain of the protein is located near the polypeptide exit tunnel on the outside of the subunit, while an extended beta-hairpin is found that lines the wall of the exit tunnel in the center of the 70S ribosome. This is Large ribosomal subunit protein uL22 from Dehalococcoides mccartyi (strain ATCC BAA-2266 / KCTC 15142 / 195) (Dehalococcoides ethenogenes (strain 195)).